A 255-amino-acid polypeptide reads, in one-letter code: Large ribosomal subunit protein uL2 (255 aa).

Residues 201–229 (YAHPHGGGSHQQGGTPVKKNAPPGQKVGF) form a disordered region.

It belongs to the universal ribosomal protein uL2 family. In terms of assembly, part of the 50S ribosomal subunit. Forms a bridge to the 30S subunit in the 70S ribosome.

One of the primary rRNA binding proteins. Required for association of the 30S and 50S subunits to form the 70S ribosome, for tRNA binding and peptide bond formation. It has been suggested to have peptidyltransferase activity; this is somewhat controversial. Makes several contacts with the 16S rRNA in the 70S ribosome. The chain is Large ribosomal subunit protein uL2 from Caldivirga maquilingensis (strain ATCC 700844 / DSM 13496 / JCM 10307 / IC-167).